We begin with the raw amino-acid sequence, 84 residues long: uncharacterized protein (84 aa).

Positions 1–83 (MDDKFTTLPC…CKQAVFVYKI (83 aa)) constitute an LITAF domain. C21 and C24 together coordinate Zn(2+). Residues 39 to 61 (MSWVVCTAITLACLPCCCIPFLC) are membrane-binding amphipathic helix. Zn(2+) is bound by residues C71 and C74.

Its subcellular location is the host membrane. This is an uncharacterized protein from Dryophytes versicolor (chameleon treefrog).